The primary structure comprises 163 residues: Regulator of chromosome segregation (163 aa).

As to quaternary structure, interacts with CpsD and ParB.

Its subcellular location is the cytoplasm. The protein localises to the nucleoid. It is found in the cell membrane. Required for cell division and chromosome segregation. Binds to DNA and is involved in segregating the origin of replication (oriC) region to new daughter cells. When the nucleoid is not properly segregated, involved in blocking the cell division to protect the nucleoid against premature truncation by the newly forming septum, a function which is dependent on CpsD and its autophosphorylation level. The protein is Regulator of chromosome segregation of Streptococcus pneumoniae serotype 2 (strain D39 / NCTC 7466).